Reading from the N-terminus, the 299-residue chain is NAD kinase (299 aa).

The active-site Proton acceptor is Asp-71. NAD(+) contacts are provided by residues 71-72 (DG), 145-146 (ND), Arg-173, Asp-175, 186-191 (TAYSLS), Ala-210, and Gln-248.

The protein belongs to the NAD kinase family. A divalent metal cation is required as a cofactor.

Its subcellular location is the cytoplasm. It catalyses the reaction NAD(+) + ATP = ADP + NADP(+) + H(+). Involved in the regulation of the intracellular balance of NAD and NADP, and is a key enzyme in the biosynthesis of NADP. Catalyzes specifically the phosphorylation on 2'-hydroxyl of the adenosine moiety of NAD to yield NADP. This Bordetella bronchiseptica (strain ATCC BAA-588 / NCTC 13252 / RB50) (Alcaligenes bronchisepticus) protein is NAD kinase.